A 471-amino-acid chain; its full sequence is Neuraminidase (471 aa).

The Intravirion segment spans residues 1–6 (MNPNQK). Residues 7 to 27 (IICISATGMTLSVVSLLIGIA) traverse the membrane as a helical segment. Positions 11 to 33 (SATGMTLSVVSLLIGIANLGLNI) are involved in apical transport and lipid raft association. Residues 28–471 (NLGLNIGLHY…HDGAEIIYFK (444 aa)) lie on the Virion surface side of the membrane. A hypervariable stalk region region spans residues 36 to 89 (HYKVGDTPDVNTPNVNGTNSTTTTIINNNTQNNFTNITNIIHNKNEERTFLNLT). Residues Asn51, Asn54, Asn63, Asn68, Asn71, and Asn87 are each glycosylated (N-linked (GlcNAc...) asparagine; by host). A head of neuraminidase region spans residues 92–471 (LCEVNSWHIL…HDGAEIIYFK (380 aa)). Intrachain disulfides connect Cys93-Cys420, Cys125-Cys130, Cys185-Cys232, Cys234-Cys239, Cys280-Cys293, Cys282-Cys291, Cys320-Cys338, and Cys424-Cys450. Arg119 serves as a coordination point for substrate. N-linked (GlcNAc...) asparagine; by host glycosylation is present at Asn147. Asp152 serves as the catalytic Proton donor/acceptor. Residue Arg153 participates in substrate binding. Residue Asn202 is glycosylated (N-linked (GlcNAc...) asparagine; by host). 278 to 279 (EE) provides a ligand contact to substrate. Arg294 is a substrate binding site. Ca(2+) contacts are provided by Asp295, Gly299, and Asp326. Arg373 serves as a coordination point for substrate. The N-linked (GlcNAc...) asparagine; by host glycan is linked to Asn403. Tyr407 acts as the Nucleophile in catalysis.

It belongs to the glycosyl hydrolase 34 family. In terms of assembly, homotetramer. The cofactor is Ca(2+). N-glycosylated.

It is found in the virion membrane. Its subcellular location is the host apical cell membrane. It catalyses the reaction Hydrolysis of alpha-(2-&gt;3)-, alpha-(2-&gt;6)-, alpha-(2-&gt;8)- glycosidic linkages of terminal sialic acid residues in oligosaccharides, glycoproteins, glycolipids, colominic acid and synthetic substrates.. With respect to regulation, inhibited by the neuraminidase inhibitors zanamivir (Relenza) and oseltamivir (Tamiflu). These drugs interfere with the release of progeny virus from infected cells and are effective against all influenza strains. Resistance to neuraminidase inhibitors is quite rare. Functionally, catalyzes the removal of terminal sialic acid residues from viral and cellular glycoconjugates. Cleaves off the terminal sialic acids on the glycosylated HA during virus budding to facilitate virus release. Additionally helps virus spread through the circulation by further removing sialic acids from the cell surface. These cleavages prevent self-aggregation and ensure the efficient spread of the progeny virus from cell to cell. Otherwise, infection would be limited to one round of replication. Described as a receptor-destroying enzyme because it cleaves a terminal sialic acid from the cellular receptors. May facilitate viral invasion of the upper airways by cleaving the sialic acid moieties on the mucin of the airway epithelial cells. Likely to plays a role in the budding process through its association with lipid rafts during intracellular transport. May additionally display a raft-association independent effect on budding. Plays a role in the determination of host range restriction on replication and virulence. Sialidase activity in late endosome/lysosome traffic seems to enhance virus replication. The protein is Neuraminidase of Influenza A virus (strain A/Gull/Maryland/704/1977 H13N6).